The following is a 502-amino-acid chain: Histidine--tRNA ligase (502 aa).

Belongs to the class-II aminoacyl-tRNA synthetase family. As to quaternary structure, homodimer.

It localises to the cytoplasm. The catalysed reaction is tRNA(His) + L-histidine + ATP = L-histidyl-tRNA(His) + AMP + diphosphate + H(+). This is Histidine--tRNA ligase from Brucella suis (strain ATCC 23445 / NCTC 10510).